The sequence spans 99 residues: Malonate decarboxylase acyl carrier protein (99 aa).

S25 bears the O-(phosphoribosyl dephospho-coenzyme A)serine mark.

It belongs to the MdcC family. Covalently binds the prosthetic group of malonate decarboxylase.

It is found in the cytoplasm. In terms of biological role, subunit of malonate decarboxylase, it is an acyl carrier protein to which acetyl and malonyl thioester residues are bound via a 2'-(5''-phosphoribosyl)-3'-dephospho-CoA prosthetic group and turn over during the catalytic mechanism. The protein is Malonate decarboxylase acyl carrier protein of Pseudomonas savastanoi pv. phaseolicola (strain 1448A / Race 6) (Pseudomonas syringae pv. phaseolicola (strain 1448A / Race 6)).